Consider the following 307-residue polypeptide: Porphobilinogen deaminase (307 aa).

Cys239 is subject to S-(dipyrrolylmethanemethyl)cysteine.

Belongs to the HMBS family. In terms of assembly, monomer. Dipyrromethane serves as cofactor.

The catalysed reaction is 4 porphobilinogen + H2O = hydroxymethylbilane + 4 NH4(+). The protein operates within porphyrin-containing compound metabolism; protoporphyrin-IX biosynthesis; coproporphyrinogen-III from 5-aminolevulinate: step 2/4. In terms of biological role, tetrapolymerization of the monopyrrole PBG into the hydroxymethylbilane pre-uroporphyrinogen in several discrete steps. This Campylobacter jejuni subsp. jejuni serotype O:6 (strain 81116 / NCTC 11828) protein is Porphobilinogen deaminase.